Consider the following 324-residue polypeptide: Acetyl-coenzyme A carboxylase carboxyl transferase subunit alpha (324 aa).

The region spanning 37–291 is the CoA carboxyltransferase C-terminal domain; the sequence is ILEDKLENLE…DLMLRKTFEQ (255 aa).

The protein belongs to the AccA family. As to quaternary structure, acetyl-CoA carboxylase is a heterohexamer composed of biotin carboxyl carrier protein (AccB), biotin carboxylase (AccC) and two subunits each of ACCase subunit alpha (AccA) and ACCase subunit beta (AccD).

The protein resides in the cytoplasm. The enzyme catalyses N(6)-carboxybiotinyl-L-lysyl-[protein] + acetyl-CoA = N(6)-biotinyl-L-lysyl-[protein] + malonyl-CoA. The protein operates within lipid metabolism; malonyl-CoA biosynthesis; malonyl-CoA from acetyl-CoA: step 1/1. Component of the acetyl coenzyme A carboxylase (ACC) complex. First, biotin carboxylase catalyzes the carboxylation of biotin on its carrier protein (BCCP) and then the CO(2) group is transferred by the carboxyltransferase to acetyl-CoA to form malonyl-CoA. The sequence is that of Acetyl-coenzyme A carboxylase carboxyl transferase subunit alpha from Bacillus cereus (strain Q1).